The chain runs to 691 residues: Glycine--tRNA ligase beta subunit (691 aa).

It belongs to the class-II aminoacyl-tRNA synthetase family. Tetramer of two alpha and two beta subunits.

The protein resides in the cytoplasm. It catalyses the reaction tRNA(Gly) + glycine + ATP = glycyl-tRNA(Gly) + AMP + diphosphate. This Levilactobacillus brevis (strain ATCC 367 / BCRC 12310 / CIP 105137 / JCM 1170 / LMG 11437 / NCIMB 947 / NCTC 947) (Lactobacillus brevis) protein is Glycine--tRNA ligase beta subunit.